Reading from the N-terminus, the 329-residue chain is Probable CTD kinase subunit alpha homolog (329 aa).

One can recognise a Protein kinase domain in the interval 22–297; that stretch reads YEKIRIIGEG…VEQVVGSKYF (276 aa). ATP contacts are provided by residues 28–36 and Lys49; that span reads IGEGTFGQV. The active-site Proton acceptor is Asp139.

The protein belongs to the protein kinase superfamily. CMGC Ser/Thr protein kinase family. CDC2/CDKX subfamily. As to quaternary structure, component of the CTDK-I complex.

The protein resides in the nucleus. Its subcellular location is the nucleolus. It carries out the reaction [DNA-directed RNA polymerase] + ATP = phospho-[DNA-directed RNA polymerase] + ADP + H(+). Functionally, catalytic subunit of the CTDK-I complex, which hyperphosphorylates the C-terminal heptapeptide repeat domain (CTD) of the largest RNA polymerase II subunit. Involved in RNA polymerase II transcriptional elongation and pre-mRNA 3'-end processing. This chain is Probable CTD kinase subunit alpha homolog (CTK1), found in Encephalitozoon cuniculi (strain GB-M1) (Microsporidian parasite).